Reading from the N-terminus, the 545-residue chain is CTP synthase (545 aa).

The interval 1 to 266 (MATNYIFVTG…DDFVCERFRL (266 aa)) is amidoligase domain. Position 14 (serine 14) interacts with CTP. UTP is bound at residue serine 14. Residues 15–20 (SLGKGI) and aspartate 72 contribute to the ATP site. Mg(2+) is bound by residues aspartate 72 and glutamate 140. CTP is bound by residues 147–149 (DIE), 187–192 (KTKPTQ), and lysine 223. UTP-binding positions include 187–192 (KTKPTQ) and lysine 223. 239–241 (KDV) serves as a coordination point for ATP. One can recognise a Glutamine amidotransferase type-1 domain in the interval 291 to 542 (TIGMVGKYTE…VKAAYENHKK (252 aa)). Glycine 352 lines the L-glutamine pocket. The active-site Nucleophile; for glutamine hydrolysis is the cysteine 379. L-glutamine contacts are provided by residues 380–383 (LGMQ), glutamate 403, and arginine 470. Residues histidine 515 and glutamate 517 contribute to the active site.

The protein belongs to the CTP synthase family. As to quaternary structure, homotetramer.

The catalysed reaction is UTP + L-glutamine + ATP + H2O = CTP + L-glutamate + ADP + phosphate + 2 H(+). The enzyme catalyses L-glutamine + H2O = L-glutamate + NH4(+). It carries out the reaction UTP + NH4(+) + ATP = CTP + ADP + phosphate + 2 H(+). Its pathway is pyrimidine metabolism; CTP biosynthesis via de novo pathway; CTP from UDP: step 2/2. With respect to regulation, allosterically activated by GTP, when glutamine is the substrate; GTP has no effect on the reaction when ammonia is the substrate. The allosteric effector GTP functions by stabilizing the protein conformation that binds the tetrahedral intermediate(s) formed during glutamine hydrolysis. Inhibited by the product CTP, via allosteric rather than competitive inhibition. In terms of biological role, catalyzes the ATP-dependent amination of UTP to CTP with either L-glutamine or ammonia as the source of nitrogen. Regulates intracellular CTP levels through interactions with the four ribonucleotide triphosphates. The chain is CTP synthase from Haemophilus influenzae (strain PittEE).